The primary structure comprises 150 residues: 6,7-dimethyl-8-ribityllumazine synthase (150 aa).

5-amino-6-(D-ribitylamino)uracil-binding positions include Phe-11, Ile-42–Glu-44, and Cys-73–Ile-75. Glu-78–Ser-79 contacts (2S)-2-hydroxy-3-oxobutyl phosphate. The Proton donor role is filled by His-81. Asn-106 provides a ligand contact to 5-amino-6-(D-ribitylamino)uracil. Arg-120 is a (2S)-2-hydroxy-3-oxobutyl phosphate binding site.

It belongs to the DMRL synthase family.

The catalysed reaction is (2S)-2-hydroxy-3-oxobutyl phosphate + 5-amino-6-(D-ribitylamino)uracil = 6,7-dimethyl-8-(1-D-ribityl)lumazine + phosphate + 2 H2O + H(+). It functions in the pathway cofactor biosynthesis; riboflavin biosynthesis; riboflavin from 2-hydroxy-3-oxobutyl phosphate and 5-amino-6-(D-ribitylamino)uracil: step 1/2. Catalyzes the formation of 6,7-dimethyl-8-ribityllumazine by condensation of 5-amino-6-(D-ribitylamino)uracil with 3,4-dihydroxy-2-butanone 4-phosphate. This is the penultimate step in the biosynthesis of riboflavin. This chain is 6,7-dimethyl-8-ribityllumazine synthase, found in Paramagnetospirillum magneticum (strain ATCC 700264 / AMB-1) (Magnetospirillum magneticum).